The following is a 340-amino-acid chain: DNA-directed RNA polymerase subunit alpha (340 aa).

An alpha N-terminal domain (alpha-NTD) region spans residues 1-233; that stretch reads MYRNWRDLIS…EQLSIFINFD (233 aa). Positions 251–340 are alpha C-terminal domain (alpha-CTD); that stretch reads VNENLYRSVD…RIRGERKDEE (90 aa).

It belongs to the RNA polymerase alpha chain family. In terms of assembly, homodimer. The RNAP catalytic core consists of 2 alpha, 1 beta, 1 beta' and 1 omega subunit. When a sigma factor is associated with the core the holoenzyme is formed, which can initiate transcription.

The catalysed reaction is RNA(n) + a ribonucleoside 5'-triphosphate = RNA(n+1) + diphosphate. DNA-dependent RNA polymerase catalyzes the transcription of DNA into RNA using the four ribonucleoside triphosphates as substrates. This is DNA-directed RNA polymerase subunit alpha from Geobacter metallireducens (strain ATCC 53774 / DSM 7210 / GS-15).